The chain runs to 165 residues: Phosphopantetheine adenylyltransferase (165 aa).

Position 10 (T10) interacts with substrate. ATP-binding positions include 10 to 11 (TF) and H18. Residues K42, L74, and R88 each coordinate substrate. Residues 89 to 91 (GLR), E99, and 124 to 130 (NAFISSS) contribute to the ATP site.

This sequence belongs to the bacterial CoaD family. Homohexamer. Mg(2+) is required as a cofactor.

It is found in the cytoplasm. The catalysed reaction is (R)-4'-phosphopantetheine + ATP + H(+) = 3'-dephospho-CoA + diphosphate. It functions in the pathway cofactor biosynthesis; coenzyme A biosynthesis; CoA from (R)-pantothenate: step 4/5. In terms of biological role, reversibly transfers an adenylyl group from ATP to 4'-phosphopantetheine, yielding dephospho-CoA (dPCoA) and pyrophosphate. This chain is Phosphopantetheine adenylyltransferase, found in Helicobacter hepaticus (strain ATCC 51449 / 3B1).